Here is a 195-residue protein sequence, read N- to C-terminus: Putative C-P lyase subunit protein HtxG (195 aa).

Belongs to the PhnH family.

Belongs to an operon involved in hypophosphite oxidation. Exact function not known. This chain is Putative C-P lyase subunit protein HtxG (htxG), found in Stutzerimonas stutzeri (Pseudomonas stutzeri).